Here is a 111-residue protein sequence, read N- to C-terminus: Large ribosomal subunit protein eL33x (111 aa).

It belongs to the eukaryotic ribosomal protein eL33 family.

The polypeptide is Large ribosomal subunit protein eL33x (RPL35AD) (Arabidopsis thaliana (Mouse-ear cress)).